Here is a 430-residue protein sequence, read N- to C-terminus: UDP-N-acetylglucosamine 1-carboxyvinyltransferase (430 aa).

Residue 22–23 coordinates phosphoenolpyruvate; it reads KN. UDP-N-acetyl-alpha-D-glucosamine is bound at residue arginine 102. Cysteine 126 serves as the catalytic Proton donor. Cysteine 126 is subject to 2-(S-cysteinyl)pyruvic acid O-phosphothioketal. UDP-N-acetyl-alpha-D-glucosamine is bound by residues 131-135, 172-175, aspartate 317, and isoleucine 339; these read RPVDL and KVSV.

Belongs to the EPSP synthase family. MurA subfamily.

The protein localises to the cytoplasm. The catalysed reaction is phosphoenolpyruvate + UDP-N-acetyl-alpha-D-glucosamine = UDP-N-acetyl-3-O-(1-carboxyvinyl)-alpha-D-glucosamine + phosphate. It participates in cell wall biogenesis; peptidoglycan biosynthesis. Its function is as follows. Cell wall formation. Adds enolpyruvyl to UDP-N-acetylglucosamine. In Allorhizobium ampelinum (strain ATCC BAA-846 / DSM 112012 / S4) (Agrobacterium vitis (strain S4)), this protein is UDP-N-acetylglucosamine 1-carboxyvinyltransferase.